The chain runs to 602 residues: Arginine--tRNA ligase (602 aa).

Residues 124–134 carry the 'HIGH' region motif; the sequence is ANPTGPVHVGR.

The protein belongs to the class-I aminoacyl-tRNA synthetase family.

The protein localises to the cytoplasm. The enzyme catalyses tRNA(Arg) + L-arginine + ATP = L-arginyl-tRNA(Arg) + AMP + diphosphate. This Halorubrum lacusprofundi (strain ATCC 49239 / DSM 5036 / JCM 8891 / ACAM 34) protein is Arginine--tRNA ligase.